Here is a 124-residue protein sequence, read N- to C-terminus: Protein TAR1 (124 aa).

Positions 80–124 (KNRTPRHTGFSPSMTSCSKEHRQGTAPKLPSPNYNSGTEGTRFQI) are disordered. Positions 111 to 124 (PNYNSGTEGTRFQI) are enriched in polar residues.

Its subcellular location is the mitochondrion. May be involved in mtDNA stability or mitochondrial gene expression regulation at the post-transcriptional level. In Saccharomyces cerevisiae (strain ATCC 204508 / S288c) (Baker's yeast), this protein is Protein TAR1 (TAR1).